A 214-amino-acid polypeptide reads, in one-letter code: Large ribosomal subunit protein uL16 (214 aa).

Citrulline is present on R32. Residue K175 forms a Glycyl lysine isopeptide (Lys-Gly) (interchain with G-Cter in SUMO2) linkage. A Glycyl lysine isopeptide (Lys-Gly) (interchain with G-Cter in ubiquitin) cross-link involves residue K188.

Belongs to the universal ribosomal protein uL16 family. Component of the large ribosomal subunit. Mature ribosomes consist of a small (40S) and a large (60S) subunit. The 40S subunit contains about 33 different proteins and 1 molecule of RNA (18S). The 60S subunit contains about 49 different proteins and 3 molecules of RNA (28S, 5.8S and 5S). In terms of processing, citrullinated by PADI4. Ufmylated by UFL1.

It localises to the cytoplasm. In terms of biological role, component of the large ribosomal subunit. Plays a role in the formation of actively translating ribosomes. May play a role in the embryonic brain development. The protein is Large ribosomal subunit protein uL16 of Homo sapiens (Human).